The following is a 661-amino-acid chain: DNA ligase (661 aa).

NAD(+)-binding positions include 31 to 35 (DSGYD), 80 to 81 (SL), and Glu-109. Lys-111 (N6-AMP-lysine intermediate) is an active-site residue. NAD(+)-binding residues include Arg-132, Glu-167, Lys-283, and Lys-307. The Zn(2+) site is built by Cys-401, Cys-404, Cys-419, and Cys-424. Residues 582 to 661 (AGEQLLQGKT…AGFLNLLGLS (80 aa)) form the BRCT domain.

This sequence belongs to the NAD-dependent DNA ligase family. LigA subfamily. Requires Mg(2+) as cofactor. Mn(2+) serves as cofactor.

It catalyses the reaction NAD(+) + (deoxyribonucleotide)n-3'-hydroxyl + 5'-phospho-(deoxyribonucleotide)m = (deoxyribonucleotide)n+m + AMP + beta-nicotinamide D-nucleotide.. In terms of biological role, DNA ligase that catalyzes the formation of phosphodiester linkages between 5'-phosphoryl and 3'-hydroxyl groups in double-stranded DNA using NAD as a coenzyme and as the energy source for the reaction. It is essential for DNA replication and repair of damaged DNA. The protein is DNA ligase of Syntrophomonas wolfei subsp. wolfei (strain DSM 2245B / Goettingen).